The following is a 680-amino-acid chain: Translation factor GUF1 homolog, chloroplastic (680 aa).

The transit peptide at 1–51 (MATATASRLAVPAPRTSPQAPGRRRPAAPLPSAPPRPRALSAAPRGRVVCP) directs the protein to the chloroplast. Residues 1–68 (MATATASRLA…ASTTDAGQDR (68 aa)) form a disordered region. Residues 28-37 (APLPSAPPRP) show a composition bias toward pro residues. The segment covering 38-60 (RALSAAPRGRVVCPAAPASSPAS) has biased composition (low complexity). A tr-type G domain is found at 75 to 256 (SNIRNFSIIA…AIVTKIPPPQ (182 aa)). GTP is bound by residues 84 to 91 (AHIDHGKS), 149 to 153 (DTPGH), and 203 to 206 (NKID).

The protein belongs to the TRAFAC class translation factor GTPase superfamily. Classic translation factor GTPase family. LepA subfamily.

It localises to the plastid. The protein resides in the chloroplast. It carries out the reaction GTP + H2O = GDP + phosphate + H(+). Its function is as follows. Promotes chloroplast protein synthesis. May act as a fidelity factor of the translation reaction, by catalyzing a one-codon backward translocation of tRNAs on improperly translocated ribosomes. The protein is Translation factor GUF1 homolog, chloroplastic of Oryza sativa subsp. japonica (Rice).